A 345-amino-acid polypeptide reads, in one-letter code: Putative [LysW]-L-2-aminoadipate/[LysW]-L-glutamate phosphate reductase (345 aa).

11–14 (SGFT) serves as a coordination point for NADP(+). Positions 34 to 56 (TSRSKENKTIGHSHPNLRHSDLR) are disordered. Residue Cys146 is part of the active site. Position 309 (Asn309) interacts with NADP(+).

Belongs to the NAGSA dehydrogenase family. Type 1 subfamily. LysY sub-subfamily.

It localises to the cytoplasm. It catalyses the reaction [amino-group carrier protein]-C-terminal-N-(1-carboxy-5-oxopentan-1-yl)-L-glutamine + phosphate + NADP(+) = [amino-group carrier protein]-C-terminal-N-(1-carboxy-5-phosphooxy-5-oxopentan-1-yl)-L-glutamine + NADPH + H(+). It carries out the reaction [amino-group carrier protein]-C-terminal-gamma-(L-glutamyl-5-semialdehyde)-L-glutamate + phosphate + NADP(+) = [amino-group carrier protein]-C-terminal-gamma-(5-phospho-L-glutamyl)-L-glutamate + NADPH + H(+). It participates in amino-acid biosynthesis; L-lysine biosynthesis via AAA pathway; L-lysine from L-alpha-aminoadipate (Thermus route): step 3/5. Its pathway is amino-acid biosynthesis; L-arginine biosynthesis. Functionally, involved in both the arginine and lysine biosynthetic pathways. This Haloarcula marismortui (strain ATCC 43049 / DSM 3752 / JCM 8966 / VKM B-1809) (Halobacterium marismortui) protein is Putative [LysW]-L-2-aminoadipate/[LysW]-L-glutamate phosphate reductase.